Reading from the N-terminus, the 541-residue chain is Exopolysaccharide phosphotransferase SCO6021 (541 aa).

The protein belongs to the stealth family.

This Streptomyces coelicolor (strain ATCC BAA-471 / A3(2) / M145) protein is Exopolysaccharide phosphotransferase SCO6021.